Reading from the N-terminus, the 619-residue chain is Probable galacturonosyltransferase 7 (619 aa).

The Cytoplasmic segment spans residues Met-1–Lys-19. Residues Val-20–Leu-40 form a helical; Signal-anchor for type II membrane protein membrane-spanning segment. Residues Leu-41–Pro-619 lie on the Lumenal side of the membrane. N-linked (GlcNAc...) asparagine glycans are attached at residues Asn-68, Asn-106, Asn-132, Asn-343, and Asn-421. The tract at residues Lys-95 to Ser-139 is disordered. Polar residues predominate over residues Val-124–Ser-139.

The protein belongs to the glycosyltransferase 8 family. Expressed in roots, inflorescences, flowers, siliques, leaves and stems.

Its subcellular location is the golgi apparatus membrane. Its pathway is glycan metabolism; pectin biosynthesis. May be involved in pectin biosynthesis. The chain is Probable galacturonosyltransferase 7 (GAUT7) from Arabidopsis thaliana (Mouse-ear cress).